A 721-amino-acid polypeptide reads, in one-letter code: Fatty acid oxidation complex subunit alpha (721 aa).

An enoyl-CoA hydratase/isomerase region spans residues 1–190 (MIYEGKAITV…KVGVVDAIVA (190 aa)). Position 297 (Asp-297) interacts with substrate. A 3-hydroxyacyl-CoA dehydrogenase region spans residues 312–721 (RDVKQAAVLG…SFFGQASSEV (410 aa)). NAD(+) is bound by residues Met-325, Asp-344, 401 to 403 (VVE), Lys-408, and Ser-430. Catalysis depends on His-451, which acts as the For 3-hydroxyacyl-CoA dehydrogenase activity. Asn-454 lines the NAD(+) pocket. Residues Asn-501 and Tyr-660 each contribute to the substrate site.

The protein in the N-terminal section; belongs to the enoyl-CoA hydratase/isomerase family. In the C-terminal section; belongs to the 3-hydroxyacyl-CoA dehydrogenase family. As to quaternary structure, heterotetramer of two alpha chains (FadB) and two beta chains (FadA).

It carries out the reaction a (3S)-3-hydroxyacyl-CoA + NAD(+) = a 3-oxoacyl-CoA + NADH + H(+). It catalyses the reaction a (3S)-3-hydroxyacyl-CoA = a (2E)-enoyl-CoA + H2O. The catalysed reaction is a 4-saturated-(3S)-3-hydroxyacyl-CoA = a (3E)-enoyl-CoA + H2O. The enzyme catalyses (3S)-3-hydroxybutanoyl-CoA = (3R)-3-hydroxybutanoyl-CoA. It carries out the reaction a (3Z)-enoyl-CoA = a 4-saturated (2E)-enoyl-CoA. It catalyses the reaction a (3E)-enoyl-CoA = a 4-saturated (2E)-enoyl-CoA. It functions in the pathway lipid metabolism; fatty acid beta-oxidation. In terms of biological role, involved in the aerobic and anaerobic degradation of long-chain fatty acids via beta-oxidation cycle. Catalyzes the formation of 3-oxoacyl-CoA from enoyl-CoA via L-3-hydroxyacyl-CoA. It can also use D-3-hydroxyacyl-CoA and cis-3-enoyl-CoA as substrate. The sequence is that of Fatty acid oxidation complex subunit alpha from Pseudomonas syringae pv. tomato (strain ATCC BAA-871 / DC3000).